A 530-amino-acid chain; its full sequence is Bifunctional purine biosynthesis protein PurH (530 aa).

An MGS-like domain is found at 1 to 148 (MNNARPIRRA…KNHKDVTIVV (148 aa)).

The protein belongs to the PurH family.

The catalysed reaction is (6R)-10-formyltetrahydrofolate + 5-amino-1-(5-phospho-beta-D-ribosyl)imidazole-4-carboxamide = 5-formamido-1-(5-phospho-D-ribosyl)imidazole-4-carboxamide + (6S)-5,6,7,8-tetrahydrofolate. It catalyses the reaction IMP + H2O = 5-formamido-1-(5-phospho-D-ribosyl)imidazole-4-carboxamide. It functions in the pathway purine metabolism; IMP biosynthesis via de novo pathway; 5-formamido-1-(5-phospho-D-ribosyl)imidazole-4-carboxamide from 5-amino-1-(5-phospho-D-ribosyl)imidazole-4-carboxamide (10-formyl THF route): step 1/1. The protein operates within purine metabolism; IMP biosynthesis via de novo pathway; IMP from 5-formamido-1-(5-phospho-D-ribosyl)imidazole-4-carboxamide: step 1/1. The polypeptide is Bifunctional purine biosynthesis protein PurH (Aliivibrio fischeri (strain MJ11) (Vibrio fischeri)).